The chain runs to 943 residues: Isoleucine--tRNA ligase (943 aa).

A 'HIGH' region motif is present at residues proline 58–histidine 68. Residue glutamate 567 coordinates L-isoleucyl-5'-AMP. Positions lysine 608 to serine 612 match the 'KMSKS' region motif. ATP is bound at residue lysine 611. Zn(2+) contacts are provided by cysteine 906, cysteine 909, cysteine 926, and cysteine 929.

This sequence belongs to the class-I aminoacyl-tRNA synthetase family. IleS type 1 subfamily. As to quaternary structure, monomer. The cofactor is Zn(2+).

It localises to the cytoplasm. It catalyses the reaction tRNA(Ile) + L-isoleucine + ATP = L-isoleucyl-tRNA(Ile) + AMP + diphosphate. In terms of biological role, catalyzes the attachment of isoleucine to tRNA(Ile). As IleRS can inadvertently accommodate and process structurally similar amino acids such as valine, to avoid such errors it has two additional distinct tRNA(Ile)-dependent editing activities. One activity is designated as 'pretransfer' editing and involves the hydrolysis of activated Val-AMP. The other activity is designated 'posttransfer' editing and involves deacylation of mischarged Val-tRNA(Ile). This Pseudomonas putida (strain GB-1) protein is Isoleucine--tRNA ligase.